We begin with the raw amino-acid sequence, 307 residues long: Aspartate carbamoyltransferase catalytic subunit (307 aa).

2 residues coordinate carbamoyl phosphate: R54 and T55. K83 is a binding site for L-aspartate. The carbamoyl phosphate site is built by R104, H132, and Q135. L-aspartate-binding residues include R165 and R228. Carbamoyl phosphate is bound by residues L267 and P268.

This sequence belongs to the aspartate/ornithine carbamoyltransferase superfamily. ATCase family. In terms of assembly, heterododecamer (2C3:3R2) of six catalytic PyrB chains organized as two trimers (C3), and six regulatory PyrI chains organized as three dimers (R2).

It carries out the reaction carbamoyl phosphate + L-aspartate = N-carbamoyl-L-aspartate + phosphate + H(+). It participates in pyrimidine metabolism; UMP biosynthesis via de novo pathway; (S)-dihydroorotate from bicarbonate: step 2/3. Catalyzes the condensation of carbamoyl phosphate and aspartate to form carbamoyl aspartate and inorganic phosphate, the committed step in the de novo pyrimidine nucleotide biosynthesis pathway. This chain is Aspartate carbamoyltransferase catalytic subunit, found in Clostridium botulinum (strain Eklund 17B / Type B).